The chain runs to 251 residues: MLIKQKGIIIKTIDYGESDKIITILNEYGAKVPLMVRRAKKSKSGLQANTQLFVYGLFIYSKWKGMGTLSSVDVIDQNYHLRLDIYESSYASLCTETIDRSMETDGISKNSYELLHFVLDKIRQGISAQLMSVVVLLKCMTKFGFNAVFDRCVITQSEDQSKLVGYSFKYDGAISENVAYKDTHAFQLSNKTLYLLDILQKLPINQMSSLSIHETIVDEMSELVILLYKEYAGMYFKSQKLINQLYRLDNL.

This sequence belongs to the RecO family.

Involved in DNA repair and RecF pathway recombination. The sequence is that of DNA repair protein RecO from Staphylococcus saprophyticus subsp. saprophyticus (strain ATCC 15305 / DSM 20229 / NCIMB 8711 / NCTC 7292 / S-41).